The following is a 231-amino-acid chain: Uracil-DNA glycosylase (231 aa).

The active-site Proton acceptor is aspartate 71.

It belongs to the uracil-DNA glycosylase (UDG) superfamily. UNG family.

It is found in the cytoplasm. It carries out the reaction Hydrolyzes single-stranded DNA or mismatched double-stranded DNA and polynucleotides, releasing free uracil.. Its function is as follows. Excises uracil residues from the DNA which can arise as a result of misincorporation of dUMP residues by DNA polymerase or due to deamination of cytosine. The polypeptide is Uracil-DNA glycosylase (Pseudomonas aeruginosa (strain UCBPP-PA14)).